The chain runs to 210 residues: Somatotropin (210 aa).

A signal peptide spans 1 to 22 (MGQVFLLMPVLLVSCFLSQGAA). Histidine 38 contributes to the Zn(2+) binding site. A disulfide bridge links cysteine 71 with cysteine 183. Glutamate 192 is a Zn(2+) binding site. Cysteine 200 and cysteine 208 are oxidised to a cystine.

The protein belongs to the somatotropin/prolactin family.

It is found in the secreted. In terms of biological role, growth hormone plays an important role in growth control and is involved in the regulation of several anabolic processes. Implicated as an osmoregulatory substance important for seawater adaptation. The sequence is that of Somatotropin (gh) from Salmo salar (Atlantic salmon).